Here is a 500-residue protein sequence, read N- to C-terminus: Small ribosomal subunit protein uS3m (500 aa).

This sequence belongs to the universal ribosomal protein uS3 family.

It localises to the mitochondrion. In Prototheca wickerhamii, this protein is Small ribosomal subunit protein uS3m (RPS3).